We begin with the raw amino-acid sequence, 154 residues long: Small ribosomal subunit protein eS10 (154 aa).

A disordered region spans residues 91–154; the sequence is ATMKKQASRP…ERSAPAPQQN (64 aa). Basic and acidic residues predominate over residues 124–135; it reads RGDRRQGGDRRG.

Belongs to the eukaryotic ribosomal protein eS10 family.

It is found in the cytoplasm. This chain is Small ribosomal subunit protein eS10 (rps10), found in Dictyostelium discoideum (Social amoeba).